A 229-amino-acid chain; its full sequence is PKHD-type hydroxylase Nham_1514 (229 aa).

In terms of domain architecture, Fe2OG dioxygenase spans 78 to 180 (QIFPPLFNRY…RVASFFWLQS (103 aa)). The Fe cation site is built by H98, D100, and H161. R171 is a binding site for 2-oxoglutarate.

It depends on Fe(2+) as a cofactor. L-ascorbate is required as a cofactor.

The protein is PKHD-type hydroxylase Nham_1514 of Nitrobacter hamburgensis (strain DSM 10229 / NCIMB 13809 / X14).